A 239-amino-acid chain; its full sequence is Cell number regulator 6 (239 aa).

The span at 1-10 (MAEDATSSHP) shows a compositional bias: polar residues. The interval 1–33 (MAEDATSSHPSRYVKLTKDQDAPAEDIRPGELN) is disordered. A compositionally biased stretch (basic and acidic residues) spans 16 to 29 (LTKDQDAPAEDIRP). 2 consecutive transmembrane segments (helical) span residues 107 to 127 (CVCHAVFVEGGITLAILTAIF) and 136 to 156 (FLIGEGLVFSWWLCATYTGIF).

This sequence belongs to the cornifelin family. Expressed in roots, leaves, stalks, apical meristems, immature ears, endosperm, pericarp and tassel spikelets.

The protein localises to the membrane. The chain is Cell number regulator 6 (CNR6) from Zea mays (Maize).